The following is a 151-amino-acid chain: Phosphopantetheine adenylyltransferase (151 aa).

Substrate is bound at residue T9. ATP-binding positions include T9–F10 and H17. The substrate site is built by K41, T73, and R87. ATP contacts are provided by residues G88–R90, E98, and L122–T128.

This sequence belongs to the bacterial CoaD family. Homohexamer. Requires Mg(2+) as cofactor.

It is found in the cytoplasm. The enzyme catalyses (R)-4'-phosphopantetheine + ATP + H(+) = 3'-dephospho-CoA + diphosphate. It participates in cofactor biosynthesis; coenzyme A biosynthesis; CoA from (R)-pantothenate: step 4/5. Its function is as follows. Reversibly transfers an adenylyl group from ATP to 4'-phosphopantetheine, yielding dephospho-CoA (dPCoA) and pyrophosphate. In Phocaeicola vulgatus (strain ATCC 8482 / DSM 1447 / JCM 5826 / CCUG 4940 / NBRC 14291 / NCTC 11154) (Bacteroides vulgatus), this protein is Phosphopantetheine adenylyltransferase.